The primary structure comprises 396 residues: Calcium-binding and spermatid-specific protein 1 (396 aa).

Residues Met1 to Pro21 are disordered. Ser274 bears the Phosphoserine mark. Positions Glu276 to Ala296 are disordered. A compositionally biased stretch (acidic residues) spans Glu283–Pro293. Thr288 is modified (phosphothreonine; by CK2). 2 positions are modified to phosphoserine: Ser320 and Ser377. Residues Glu336 to Ile396 are disordered.

The protein localises to the cytoplasm. It is found in the mitochondrion inner membrane. The protein resides in the cell projection. Its subcellular location is the cilium. It localises to the flagellum. The protein localises to the cytoplasmic vesicle. It is found in the secretory vesicle. The protein resides in the acrosome. Functionally, calcium-binding protein. Essential for maintaining the structural integrity of the sperm flagella. The sequence is that of Calcium-binding and spermatid-specific protein 1 (CABS1) from Macaca fascicularis (Crab-eating macaque).